We begin with the raw amino-acid sequence, 159 residues long: Phosphopantetheine adenylyltransferase (159 aa).

Residue S8 participates in substrate binding. ATP is bound by residues 8 to 9 (SF) and H16. K40, V72, and R86 together coordinate substrate. ATP contacts are provided by residues 87-89 (GVR), E97, and 122-128 (YAALRSS).

This sequence belongs to the bacterial CoaD family. As to quaternary structure, homohexamer. Requires Mg(2+) as cofactor.

The protein resides in the cytoplasm. The enzyme catalyses (R)-4'-phosphopantetheine + ATP + H(+) = 3'-dephospho-CoA + diphosphate. The protein operates within cofactor biosynthesis; coenzyme A biosynthesis; CoA from (R)-pantothenate: step 4/5. In terms of biological role, reversibly transfers an adenylyl group from ATP to 4'-phosphopantetheine, yielding dephospho-CoA (dPCoA) and pyrophosphate. The protein is Phosphopantetheine adenylyltransferase of Treponema pallidum (strain Nichols).